A 185-amino-acid chain; its full sequence is F-box protein At1g61340 (185 aa).

The F-box domain occupies 78–126 (SRELEDLPLDILVRIICGVEHEDLKQLFHVSKTIREATMIAKQSHFAYS).

The polypeptide is F-box protein At1g61340 (Arabidopsis thaliana (Mouse-ear cress)).